Reading from the N-terminus, the 59-residue chain is Large ribosomal subunit protein uL30 (59 aa).

Belongs to the universal ribosomal protein uL30 family. As to quaternary structure, part of the 50S ribosomal subunit.

The protein is Large ribosomal subunit protein uL30 of Buchnera aphidicola subsp. Acyrthosiphon kondoi (Acyrthosiphon kondoi symbiotic bacterium).